Reading from the N-terminus, the 354-residue chain is NADPH dehydrogenase (354 aa).

S23, P24, C26, A58, and Q100 together coordinate FMN. Y182 serves as the catalytic Proton donor. R230, L301, G323, and R324 together coordinate FMN.

Belongs to the NADH:flavin oxidoreductase/NADH oxidase family. NamA subfamily. Homodimer. Behaves as an active monomer in solution while in the crystal packing assembles following the classical dimeric architecture of other thermophilic-like ene-reductases. FMN is required as a cofactor.

The enzyme catalyses A + NADPH + H(+) = AH2 + NADP(+). Functionally, ene-reductase that catalyzes the stereoselective reduction of activated C-C double bonds. Shows very good activity with 4-ketoisophorone, 2-cyclohexen-1-one and 1-octen-3-one, and low activity with maleimide, 2-methyl-pentenal, 2-methyl-cyclohexen-1-one, 2-cyclopenten-1-one and trans-2-hexen-1-al. Shows the highest catalytic efficiency with ketoisophorone. Exhibits a restricted substrate spectrum with generally lower activities compared to other ene-reductases. The sequence is that of NADPH dehydrogenase from Chloroflexus aggregans (strain MD-66 / DSM 9485).